The chain runs to 390 residues: GTPase Obg (390 aa).

The 159-residue stretch at 1 to 159 (MKFVDEASIL…RELLLELMLL (159 aa)) folds into the Obg domain. The tract at residues 127–147 (NTRFKSSVNRTPRQKTNGTPG) is disordered. A compositionally biased stretch (polar residues) spans 129-145 (RFKSSVNRTPRQKTNGT). One can recognise an OBG-type G domain in the interval 160–333 (ADVGMLGMPN…LCWDVMTFII (174 aa)). GTP contacts are provided by residues 166–173 (GMPNAGKS), 191–195 (FTTLV), 213–216 (DIPG), 283–286 (NKID), and 314–316 (SAA). Residues Ser-173 and Thr-193 each coordinate Mg(2+).

Belongs to the TRAFAC class OBG-HflX-like GTPase superfamily. OBG GTPase family. As to quaternary structure, monomer. The cofactor is Mg(2+).

It localises to the cytoplasm. In terms of biological role, an essential GTPase which binds GTP, GDP and possibly (p)ppGpp with moderate affinity, with high nucleotide exchange rates and a fairly low GTP hydrolysis rate. Plays a role in control of the cell cycle, stress response, ribosome biogenesis and in those bacteria that undergo differentiation, in morphogenesis control. In Escherichia coli O7:K1 (strain IAI39 / ExPEC), this protein is GTPase Obg.